The sequence spans 638 residues: 1-deoxy-D-xylulose-5-phosphate synthase (638 aa).

Thiamine diphosphate-binding positions include His-74 and 115-117 (GHS). A Mg(2+)-binding site is contributed by Asp-146. Residues 147–148 (GA), Asn-175, Tyr-286, and Glu-366 contribute to the thiamine diphosphate site. Asn-175 lines the Mg(2+) pocket.

It belongs to the transketolase family. DXPS subfamily. Homodimer. It depends on Mg(2+) as a cofactor. Thiamine diphosphate is required as a cofactor.

It carries out the reaction D-glyceraldehyde 3-phosphate + pyruvate + H(+) = 1-deoxy-D-xylulose 5-phosphate + CO2. It functions in the pathway metabolic intermediate biosynthesis; 1-deoxy-D-xylulose 5-phosphate biosynthesis; 1-deoxy-D-xylulose 5-phosphate from D-glyceraldehyde 3-phosphate and pyruvate: step 1/1. Catalyzes the acyloin condensation reaction between C atoms 2 and 3 of pyruvate and glyceraldehyde 3-phosphate to yield 1-deoxy-D-xylulose-5-phosphate (DXP). The polypeptide is 1-deoxy-D-xylulose-5-phosphate synthase (Syntrophomonas wolfei subsp. wolfei (strain DSM 2245B / Goettingen)).